We begin with the raw amino-acid sequence, 88 residues long: Small ribosomal subunit protein uS17 (88 aa).

It belongs to the universal ribosomal protein uS17 family. In terms of assembly, part of the 30S ribosomal subunit.

One of the primary rRNA binding proteins, it binds specifically to the 5'-end of 16S ribosomal RNA. In Dechloromonas aromatica (strain RCB), this protein is Small ribosomal subunit protein uS17.